A 729-amino-acid polypeptide reads, in one-letter code: Fatty acid oxidation complex subunit alpha (729 aa).

The interval 1–189 (MLYKGDTLYL…KIGLVDGVVA (189 aa)) is enoyl-CoA hydratase/isomerase. Asp296 is a binding site for substrate. Residues 311–729 (ETPKHAAVLG…ARPVGALKTA (419 aa)) form a 3-hydroxyacyl-CoA dehydrogenase region. Residues Met324, Asp343, 400-402 (VVE), Lys407, and Ser429 contribute to the NAD(+) site. The active-site For 3-hydroxyacyl-CoA dehydrogenase activity is His450. Residue Asn453 participates in NAD(+) binding. 2 residues coordinate substrate: Asn500 and Tyr660.

This sequence in the N-terminal section; belongs to the enoyl-CoA hydratase/isomerase family. The protein in the C-terminal section; belongs to the 3-hydroxyacyl-CoA dehydrogenase family. Heterotetramer of two alpha chains (FadB) and two beta chains (FadA).

The enzyme catalyses a (3S)-3-hydroxyacyl-CoA + NAD(+) = a 3-oxoacyl-CoA + NADH + H(+). It carries out the reaction a (3S)-3-hydroxyacyl-CoA = a (2E)-enoyl-CoA + H2O. It catalyses the reaction a 4-saturated-(3S)-3-hydroxyacyl-CoA = a (3E)-enoyl-CoA + H2O. The catalysed reaction is (3S)-3-hydroxybutanoyl-CoA = (3R)-3-hydroxybutanoyl-CoA. The enzyme catalyses a (3Z)-enoyl-CoA = a 4-saturated (2E)-enoyl-CoA. It carries out the reaction a (3E)-enoyl-CoA = a 4-saturated (2E)-enoyl-CoA. The protein operates within lipid metabolism; fatty acid beta-oxidation. Its function is as follows. Involved in the aerobic and anaerobic degradation of long-chain fatty acids via beta-oxidation cycle. Catalyzes the formation of 3-oxoacyl-CoA from enoyl-CoA via L-3-hydroxyacyl-CoA. It can also use D-3-hydroxyacyl-CoA and cis-3-enoyl-CoA as substrate. The sequence is that of Fatty acid oxidation complex subunit alpha from Klebsiella pneumoniae (strain 342).